A 268-amino-acid polypeptide reads, in one-letter code: Non-homologous end joining protein Ku (268 aa).

Residues 13–175 (VSLVTCPVTM…TLHDGNAVRN (163 aa)) enclose the Ku domain. Positions 174–194 (RNGGHPAARTRPASEAESADS) are disordered.

The protein belongs to the prokaryotic Ku family. As to quaternary structure, homodimer. Interacts with LigD.

With LigD forms a non-homologous end joining (NHEJ) DNA repair enzyme, which repairs dsDNA breaks with reduced fidelity. Binds linear dsDNA with 5'- and 3'- overhangs but not closed circular dsDNA nor ssDNA. Recruits and stimulates the ligase activity of LigD. This Gluconacetobacter diazotrophicus (strain ATCC 49037 / DSM 5601 / CCUG 37298 / CIP 103539 / LMG 7603 / PAl5) protein is Non-homologous end joining protein Ku.